Here is a 330-residue protein sequence, read N- to C-terminus: Phosphate acyltransferase (330 aa).

The protein belongs to the PlsX family. In terms of assembly, homodimer. Probably interacts with PlsY.

The protein localises to the cytoplasm. The enzyme catalyses a fatty acyl-[ACP] + phosphate = an acyl phosphate + holo-[ACP]. It functions in the pathway lipid metabolism; phospholipid metabolism. Catalyzes the reversible formation of acyl-phosphate (acyl-PO(4)) from acyl-[acyl-carrier-protein] (acyl-ACP). This enzyme utilizes acyl-ACP as fatty acyl donor, but not acyl-CoA. In Streptococcus pneumoniae (strain P1031), this protein is Phosphate acyltransferase.